A 345-amino-acid polypeptide reads, in one-letter code: L-rhamnose-proton symporter (345 aa).

The next 10 helical transmembrane spans lie at 4–24 (AITM…CFYA), 38–58 (WSVG…ALLL), 68–88 (FSAA…IGNI), 101–121 (MGIG…TPLL), 131–151 (TAGG…VAIV), 175–195 (LVLA…MDAA), 214–234 (LPSY…FCFI), 259–279 (VLLS…YAWG), 290–310 (ISWM…GLLL), and 323–343 (VLSL…LGMA).

Belongs to the L-rhamnose transporter (TC 2.A.7.6) family.

It is found in the cell inner membrane. It carries out the reaction L-rhamnopyranose(in) + H(+)(in) = L-rhamnopyranose(out) + H(+)(out). Functionally, uptake of L-rhamnose across the cytoplasmic membrane with the concomitant transport of protons into the cell (symport system). This chain is L-rhamnose-proton symporter, found in Cronobacter sakazakii (strain ATCC BAA-894) (Enterobacter sakazakii).